The following is a 179-amino-acid chain: Prion-like protein doppel (179 aa).

Residues M1–K25 form the signal peptide. Residues R27–A50 form a flexible tail region. The segment at R51–G155 is globular. Cystine bridges form between C95-C148 and C109-C143. N-linked (GlcNAc...) asparagine glycans are attached at residues N99 and N111. Residues K125–I142 form a cu(2+) binding region. G155 is lipidated: GPI-anchor amidated glycine. A propeptide spans A156–K179 (removed in mature form).

The protein belongs to the prion family. Post-translationally, N-glycosylated. N-glycosylated at two distinct sites. In terms of processing, O-glycosylated. Detected in testis. Detected within seminiferous tubules, on round and elongated spermatids (at protein level). Not detected in brain (at protein level). Detected in testis, and at low levels in heart. Expression in brain is very low and barely detectable.

Its subcellular location is the cell membrane. Its function is as follows. Required for normal acrosome reaction and for normal male fertility. Can bind Cu(2+). This is Prion-like protein doppel (Prnd) from Mus musculus (Mouse).